Reading from the N-terminus, the 303-residue chain is Polyisoprenyl-teichoic acid--peptidoglycan teichoic acid transferase TagU (303 aa).

The Cytoplasmic portion of the chain corresponds to 1 to 6 (MSKGKK). Residues 7–27 (IFAIIFGIILVLFLAVVGMGA) traverse the membrane as a helical; Signal-anchor for type II membrane protein segment. Residues 28–303 (KLYWDVSKSM…QELKNQLNTK (276 aa)) lie on the Extracellular side of the membrane.

It belongs to the LytR/CpsA/Psr (LCP) family.

Its subcellular location is the cell membrane. Its pathway is cell wall biogenesis. In terms of biological role, may catalyze the final step in cell wall teichoic acid biosynthesis, the transfer of the anionic cell wall polymers (APs) from their lipid-linked precursor to the cell wall peptidoglycan (PG). In Enterococcus faecalis (strain ATCC 700802 / V583), this protein is Polyisoprenyl-teichoic acid--peptidoglycan teichoic acid transferase TagU.